A 180-amino-acid chain; its full sequence is Pyruvoyl-dependent arginine decarboxylase (180 aa).

At S41 the chain carries Pyruvic acid (Ser).

The protein belongs to the PdaD family. Pyruvate is required as a cofactor.

The enzyme catalyses L-arginine + H(+) = agmatine + CO2. The polypeptide is Pyruvoyl-dependent arginine decarboxylase (Methanococcoides burtonii (strain DSM 6242 / NBRC 107633 / OCM 468 / ACE-M)).